The primary structure comprises 374 residues: MKYLLPTAAAGLLLLAAQPAMAANTGGYATTDGGEVSGAVKKTARSMKEIVDIIEAAQVDSKGKKVKGGAYPLIITYSGNEDSLIKAAEKNICGQWSKDARGVQIKEFTKGITIQGTNGSSANFGVWIVNSSNVVVRNMRFGYMPGGAQDGDAIRIDNSPNVWIDHNEIFAKNFECKGTPDNDTTFESAVDIKKGSTNVTVSYNYIHGIKKVGLSGASNTDTGRNLTYHHNIYRDVNSRLPLQRGGLVHAYNNLYDGITGSGFNVRQKGIALIESNWFENALNPVTARNDSSNFGTWELRNNNITSPSDFAKYKITWGKPSSPHINADNWKSTGKFPSISYKYTPVSAQCVKDKLANYAGVGKNLAVLTAANCK.

The N-terminal stretch at 1 to 22 (MKYLLPTAAAGLLLLAAQPAMA) is a signal peptide. An intrachain disulfide couples C93 to C176. Residues D150, D152, E187, and D191 each coordinate Ca(2+). The active site involves R239. An intrachain disulfide couples C350 to C373.

It belongs to the polysaccharide lyase 1 family. PLADES subfamily. Ca(2+) serves as cofactor.

Its subcellular location is the secreted. It carries out the reaction Eliminative cleavage of (1-&gt;4)-alpha-D-galacturonan to give oligosaccharides with 4-deoxy-alpha-D-galact-4-enuronosyl groups at their non-reducing ends.. It functions in the pathway glycan metabolism; pectin degradation; 2-dehydro-3-deoxy-D-gluconate from pectin: step 2/5. Functionally, involved in maceration and soft-rotting of plant tissue. The chain is Pectate lyase 2 (pel2) from Pectobacterium carotovorum (Erwinia carotovora).